Here is a 92-residue protein sequence, read N- to C-terminus: Small ribosomal subunit protein uS19c (92 aa).

This sequence belongs to the universal ribosomal protein uS19 family.

It localises to the plastid. It is found in the chloroplast. Its function is as follows. Protein S19 forms a complex with S13 that binds strongly to the 16S ribosomal RNA. The chain is Small ribosomal subunit protein uS19c from Cyanidium caldarium (Red alga).